The following is a 77-amino-acid chain: Translation initiation factor IF-1, chloroplastic (77 aa).

The S1-like domain occupies 1–71 (MKEQKWIHEG…TRGRIIYRLR (71 aa)).

Belongs to the IF-1 family. As to quaternary structure, component of the 30S ribosomal translation pre-initiation complex which assembles on the 30S ribosome in the order IF-2 and IF-3, IF-1 and N-formylmethionyl-tRNA(fMet); mRNA recruitment can occur at any time during PIC assembly.

The protein localises to the plastid. The protein resides in the chloroplast. Its function is as follows. One of the essential components for the initiation of protein synthesis. Stabilizes the binding of IF-2 and IF-3 on the 30S subunit to which N-formylmethionyl-tRNA(fMet) subsequently binds. Helps modulate mRNA selection, yielding the 30S pre-initiation complex (PIC). Upon addition of the 50S ribosomal subunit IF-1, IF-2 and IF-3 are released leaving the mature 70S translation initiation complex. The sequence is that of Translation initiation factor IF-1, chloroplastic from Brexia madagascariensis.